Consider the following 288-residue polypeptide: Lipoyl synthase (288 aa).

[4Fe-4S] cluster contacts are provided by Cys42, Cys47, Cys53, Cys68, Cys72, Cys75, and Ser280. The 216-residue stretch at 54–269 folds into the Radical SAM core domain; sequence WGEGTATFMI…EKYGIELGFR (216 aa).

It belongs to the radical SAM superfamily. Lipoyl synthase family. [4Fe-4S] cluster serves as cofactor.

The protein resides in the cytoplasm. It catalyses the reaction [[Fe-S] cluster scaffold protein carrying a second [4Fe-4S](2+) cluster] + N(6)-octanoyl-L-lysyl-[protein] + 2 oxidized [2Fe-2S]-[ferredoxin] + 2 S-adenosyl-L-methionine + 4 H(+) = [[Fe-S] cluster scaffold protein] + N(6)-[(R)-dihydrolipoyl]-L-lysyl-[protein] + 4 Fe(3+) + 2 hydrogen sulfide + 2 5'-deoxyadenosine + 2 L-methionine + 2 reduced [2Fe-2S]-[ferredoxin]. The protein operates within protein modification; protein lipoylation via endogenous pathway; protein N(6)-(lipoyl)lysine from octanoyl-[acyl-carrier-protein]: step 2/2. Catalyzes the radical-mediated insertion of two sulfur atoms into the C-6 and C-8 positions of the octanoyl moiety bound to the lipoyl domains of lipoate-dependent enzymes, thereby converting the octanoylated domains into lipoylated derivatives. The sequence is that of Lipoyl synthase from Flavobacterium johnsoniae (strain ATCC 17061 / DSM 2064 / JCM 8514 / BCRC 14874 / CCUG 350202 / NBRC 14942 / NCIMB 11054 / UW101) (Cytophaga johnsonae).